The chain runs to 432 residues: Ornithine decarboxylase (432 aa).

Residue Lys-98 is modified to N6-(pyridoxal phosphate)lysine. Residues Ser-229, Gly-266, and 296–299 (EPGR) contribute to the pyridoxal 5'-phosphate site. Residue 341-342 (FD) participates in substrate binding. The active-site Proton donor; shared with dimeric partner is the Cys-377. Position 378 (Asp-378) interacts with substrate. Position 407 (Tyr-407) interacts with pyridoxal 5'-phosphate.

This sequence belongs to the Orn/Lys/Arg decarboxylase class-II family. As to quaternary structure, homodimer. Only the dimer is catalytically active, as the active sites are constructed of residues from both monomers. The cofactor is pyridoxal 5'-phosphate.

Its subcellular location is the cytoplasm. It carries out the reaction L-ornithine + H(+) = putrescine + CO2. It participates in amine and polyamine biosynthesis; putrescine biosynthesis via L-ornithine pathway; putrescine from L-ornithine: step 1/1. Inhibited by antizyme (AZ) OAZ1 in response to polyamine levels. AZ inhibits the assembly of the functional homodimer by binding to ODC monomers and targeting them for ubiquitin-independent proteolytic destruction by the 26S proteasome. Catalyzes the first and rate-limiting step of polyamine biosynthesis that converts ornithine into putrescine, which is the precursor for the polyamines, spermidine and spermine. Polyamines are essential for cell proliferation and are implicated in cellular processes, ranging from DNA replication to apoptosis. This chain is Ornithine decarboxylase (spe1), found in Schizosaccharomyces pombe (strain 972 / ATCC 24843) (Fission yeast).